The primary structure comprises 276 residues: Bis(5'-nucleosyl)-tetraphosphatase, symmetrical (276 aa).

Belongs to the Ap4A hydrolase family.

The catalysed reaction is P(1),P(4)-bis(5'-adenosyl) tetraphosphate + H2O = 2 ADP + 2 H(+). Hydrolyzes diadenosine 5',5'''-P1,P4-tetraphosphate to yield ADP. The sequence is that of Bis(5'-nucleosyl)-tetraphosphatase, symmetrical from Tolumonas auensis (strain DSM 9187 / NBRC 110442 / TA 4).